The following is a 477-amino-acid chain: Aspartyl/glutamyl-tRNA(Asn/Gln) amidotransferase subunit B (477 aa).

This sequence belongs to the GatB/GatE family. GatB subfamily. Heterotrimer of A, B and C subunits.

It catalyses the reaction L-glutamyl-tRNA(Gln) + L-glutamine + ATP + H2O = L-glutaminyl-tRNA(Gln) + L-glutamate + ADP + phosphate + H(+). The catalysed reaction is L-aspartyl-tRNA(Asn) + L-glutamine + ATP + H2O = L-asparaginyl-tRNA(Asn) + L-glutamate + ADP + phosphate + 2 H(+). Its function is as follows. Allows the formation of correctly charged Asn-tRNA(Asn) or Gln-tRNA(Gln) through the transamidation of misacylated Asp-tRNA(Asn) or Glu-tRNA(Gln) in organisms which lack either or both of asparaginyl-tRNA or glutaminyl-tRNA synthetases. The reaction takes place in the presence of glutamine and ATP through an activated phospho-Asp-tRNA(Asn) or phospho-Glu-tRNA(Gln). The polypeptide is Aspartyl/glutamyl-tRNA(Asn/Gln) amidotransferase subunit B (Legionella pneumophila (strain Paris)).